An 81-amino-acid polypeptide reads, in one-letter code: Photosystem I iron-sulfur center (81 aa).

4Fe-4S ferredoxin-type domains follow at residues 2–31 (AHSV…MVPW) and 39–68 (IASA…VRVY). [4Fe-4S] cluster contacts are provided by C11, C14, C17, C21, C48, C51, C54, and C58.

In terms of assembly, the eukaryotic PSI reaction center is composed of at least 11 subunits. [4Fe-4S] cluster is required as a cofactor.

It localises to the plastid. It is found in the chloroplast thylakoid membrane. It catalyses the reaction reduced [plastocyanin] + hnu + oxidized [2Fe-2S]-[ferredoxin] = oxidized [plastocyanin] + reduced [2Fe-2S]-[ferredoxin]. Apoprotein for the two 4Fe-4S centers FA and FB of photosystem I (PSI); essential for photochemical activity. FB is the terminal electron acceptor of PSI, donating electrons to ferredoxin. The C-terminus interacts with PsaA/B/D and helps assemble the protein into the PSI complex. Required for binding of PsaD and PsaE to PSI. PSI is a plastocyanin-ferredoxin oxidoreductase, converting photonic excitation into a charge separation, which transfers an electron from the donor P700 chlorophyll pair to the spectroscopically characterized acceptors A0, A1, FX, FA and FB in turn. The protein is Photosystem I iron-sulfur center of Mesostigma viride (Green alga).